A 160-amino-acid polypeptide reads, in one-letter code: Putative transcriptional regulator protein YobU (160 aa).

The sequence is that of Putative transcriptional regulator protein YobU (yobU) from Bacillus subtilis (strain 168).